Reading from the N-terminus, the 330-residue chain is Stearoyl-CoA desaturase 5 (330 aa).

Residues 1 to 49 (MPGPATDAGKIPFCDAKEEIRAGLESSEGGGGPERPGARGQRQNIVWRN) are Cytoplasmic-facing. Substrate is bound at residue Asn49. Residues 50–70 (VVLMSLLHLGAVYSLVLIPKA) traverse the membrane as a helical segment. The Lumenal segment spans residues 71–72 (KP). The helical transmembrane segment at 73-93 (LTLLWAYFCFLLAALGVTAGA) threads the bilayer. Fe cation-binding residues include His94 and His99. The short motif at 94–99 (HRLWSH) is the Histidine box-1 element. Residues 94–193 (HRLWSHRSYR…VVRIQRKYYK (100 aa)) are Cytoplasmic-facing. Residues Asn122, Arg129, and Asp130 each contribute to the substrate site. Fe cation contacts are provided by His131, His134, and His135. The Histidine box-2 motif lies at 131–135 (HRAHH). Substrate is bound by residues Arg162 and Lys163. The helical transmembrane segment at 194 to 214 (ISVVLMCFVVPTLVPWYIWGE) threads the bilayer. Ser215 is a topological domain (lumenal). A helical transmembrane segment spans residues 216-238 (LWNSYFLASILRYTISLNISWLV). Residue Trp236 coordinates substrate. The Cytoplasmic portion of the chain corresponds to 239-330 (NSAAHMYGNR…RKARTGDSSA (92 aa)). Fe cation is bound by residues His243, His272, His275, and His276. The Histidine box-3 motif lies at 272-276 (HNYHH).

It belongs to the fatty acid desaturase type 1 family. As to quaternary structure, may self-associate and form homodimers. Fe(2+) serves as cofactor. Detected in fetal brain, and at lower levels in fetal kidney. Detected in adult brain and pancreas, and at lower levels in kidney and lung. Expressed in spiral ganglion cells and the organ of Corti of fetal cochlea.

The protein localises to the endoplasmic reticulum membrane. It catalyses the reaction octadecanoyl-CoA + 2 Fe(II)-[cytochrome b5] + O2 + 2 H(+) = (9Z)-octadecenoyl-CoA + 2 Fe(III)-[cytochrome b5] + 2 H2O. The enzyme catalyses hexadecanoyl-CoA + 2 Fe(II)-[cytochrome b5] + O2 + 2 H(+) = (9Z)-hexadecenoyl-CoA + 2 Fe(III)-[cytochrome b5] + 2 H2O. In terms of biological role, stearoyl-CoA desaturase that utilizes O(2) and electrons from reduced cytochrome b5 to introduce the first double bond into saturated fatty acyl-CoA substrates. Catalyzes the insertion of a cis double bond at the delta-9 position into fatty acyl-CoA substrates including palmitoyl-CoA and stearoyl-CoA. Gives rise to a mixture of 16:1 and 18:1 unsaturated fatty acids. Involved in neuronal cell proliferation and differentiation through down-regulation of EGFR/AKT/MAPK and Wnt signaling pathways. The protein is Stearoyl-CoA desaturase 5 (SCD5) of Homo sapiens (Human).